A 151-amino-acid chain; its full sequence is Small ribosomal subunit protein uS15 (151 aa).

Belongs to the universal ribosomal protein uS15 family. In terms of assembly, component of the small ribosomal subunit. Part of the small subunit (SSU) processome, composed of more than 70 proteins and the RNA chaperone small nucleolar RNA (snoRNA) U3.

It localises to the cytoplasm. It is found in the nucleus. The protein localises to the nucleolus. Component of the small ribosomal subunit. The ribosome is a large ribonucleoprotein complex responsible for the synthesis of proteins in the cell. Part of the small subunit (SSU) processome, first precursor of the small eukaryotic ribosomal subunit. During the assembly of the SSU processome in the nucleolus, many ribosome biogenesis factors, an RNA chaperone and ribosomal proteins associate with the nascent pre-rRNA and work in concert to generate RNA folding, modifications, rearrangements and cleavage as well as targeted degradation of pre-ribosomal RNA by the RNA exosome. This chain is Small ribosomal subunit protein uS15 (rps-13), found in Caenorhabditis elegans.